Here is a 391-residue protein sequence, read N- to C-terminus: Nicotinate phosphoribosyltransferase (391 aa).

At H216 the chain carries Phosphohistidine; by autocatalysis.

This sequence belongs to the NAPRTase family. Post-translationally, transiently phosphorylated on a His residue during the reaction cycle. Phosphorylation strongly increases the affinity for substrates and increases the rate of nicotinate D-ribonucleotide production. Dephosphorylation regenerates the low-affinity form of the enzyme, leading to product release.

It carries out the reaction nicotinate + 5-phospho-alpha-D-ribose 1-diphosphate + ATP + H2O = nicotinate beta-D-ribonucleotide + ADP + phosphate + diphosphate. Its pathway is cofactor biosynthesis; NAD(+) biosynthesis; nicotinate D-ribonucleotide from nicotinate: step 1/1. Catalyzes the synthesis of beta-nicotinate D-ribonucleotide from nicotinate and 5-phospho-D-ribose 1-phosphate at the expense of ATP. The polypeptide is Nicotinate phosphoribosyltransferase (Bordetella petrii (strain ATCC BAA-461 / DSM 12804 / CCUG 43448)).